Here is a 182-residue protein sequence, read N- to C-terminus: UPF0397 protein SPG_0438 (182 aa).

Transmembrane regions (helical) follow at residues 10–30 (VVAV…NIPT), 46–66 (LLSI…GHAI), 73–93 (YGLW…VGLF), 109–129 (ILIF…VLAP), and 148–168 (IVAG…LLLA).

This sequence belongs to the UPF0397 family.

Its subcellular location is the cell membrane. This chain is UPF0397 protein SPG_0438, found in Streptococcus pneumoniae serotype 19F (strain G54).